A 72-amino-acid polypeptide reads, in one-letter code: NAD(P)H-quinone oxidoreductase subunit O (72 aa).

This sequence belongs to the complex I NdhO subunit family. In terms of assembly, NDH-1 can be composed of about 15 different subunits; different subcomplexes with different compositions have been identified which probably have different functions.

It is found in the cellular thylakoid membrane. It carries out the reaction a plastoquinone + NADH + (n+1) H(+)(in) = a plastoquinol + NAD(+) + n H(+)(out). The catalysed reaction is a plastoquinone + NADPH + (n+1) H(+)(in) = a plastoquinol + NADP(+) + n H(+)(out). Its function is as follows. NDH-1 shuttles electrons from an unknown electron donor, via FMN and iron-sulfur (Fe-S) centers, to quinones in the respiratory and/or the photosynthetic chain. The immediate electron acceptor for the enzyme in this species is believed to be plastoquinone. Couples the redox reaction to proton translocation, and thus conserves the redox energy in a proton gradient. Cyanobacterial NDH-1 also plays a role in inorganic carbon-concentration. This Gloeothece citriformis (strain PCC 7424) (Cyanothece sp. (strain PCC 7424)) protein is NAD(P)H-quinone oxidoreductase subunit O.